The primary structure comprises 146 residues: MASDFYLRYYVGHKGKFGHEFLEFEFRPDGKLRYANNSNYKNDVMIRKEAYVHKSVMEELKRIIDDSEITKEDDALWPPPDRVGRQELEIVIGDEHISFTTSKIGSLIDVNQSKDPEGLRVFYYLVQDLKCLVFSLIGLHFKIKPI.

The protein belongs to the mago nashi family. Core component of the mRNA splicing-dependent exon junction complex (EJC); the core complex contains CASC3, EIF4A3, MAGOH, and RBM8A.

The protein localises to the nucleus. The protein resides in the nucleus speckle. Its subcellular location is the cytoplasm. Required for pre-mRNA splicing as component of the spliceosome. Core component of the exon junction complex (EJC) and also involved in the nonsense-mediated decay (NMD) pathway. The EJC is a dynamic structure consisting of core proteins and several peripheral nuclear and cytoplasmic associated factors that join the complex only transiently either during EJC assembly or during subsequent mRNA metabolism. The EJC marks the position of the exon-exon junction in the mature mRNA for the gene expression machinery and the core components remain bound to spliced mRNAs throughout all stages of mRNA metabolism thereby influencing downstream processes including nuclear mRNA export, subcellular mRNA localization, translation efficiency and nonsense-mediated mRNA decay (NMD). The protein is Protein mago nashi homolog (MAGOH) of Gallus gallus (Chicken).